The primary structure comprises 471 residues: 3-isopropylmalate dehydratase large subunit (471 aa).

[4Fe-4S] cluster is bound by residues Cys347, Cys407, and Cys410. The tract at residues 417-443 (TLQPGERSASTSNRNFEGRQGKGGRTH) is disordered.

The protein belongs to the aconitase/IPM isomerase family. LeuC type 1 subfamily. In terms of assembly, heterodimer of LeuC and LeuD. [4Fe-4S] cluster is required as a cofactor.

The catalysed reaction is (2R,3S)-3-isopropylmalate = (2S)-2-isopropylmalate. Its pathway is amino-acid biosynthesis; L-leucine biosynthesis; L-leucine from 3-methyl-2-oxobutanoate: step 2/4. In terms of biological role, catalyzes the isomerization between 2-isopropylmalate and 3-isopropylmalate, via the formation of 2-isopropylmaleate. This chain is 3-isopropylmalate dehydratase large subunit, found in Nocardioides sp. (strain ATCC BAA-499 / JS614).